A 230-amino-acid chain; its full sequence is uncharacterized protein (230 aa).

This is an uncharacterized protein from Aquifex aeolicus (strain VF5).